Reading from the N-terminus, the 419-residue chain is GTPase Obg (419 aa).

An Obg domain is found at 1 to 158 (MIFIDTAEII…RRLRLELKLV (158 aa)). Positions 159-328 (AHVGLVGLPN…LVDVLFELIS (170 aa)) constitute an OBG-type G domain. Residues 165–172 (GLPNAGKS), 190–194 (FTTRS), 211–214 (DVPG), 281–284 (NKID), and 309–311 (SAA) each bind GTP. Residues Ser-172 and Thr-192 each contribute to the Mg(2+) site. The region spanning 344–419 (ELPPLPEDFS…VIHDKAFEIL (76 aa)) is the OCT domain.

The protein belongs to the TRAFAC class OBG-HflX-like GTPase superfamily. OBG GTPase family. As to quaternary structure, monomer. Mg(2+) serves as cofactor.

The protein resides in the cytoplasm. In terms of biological role, an essential GTPase which binds GTP, GDP and possibly (p)ppGpp with moderate affinity, with high nucleotide exchange rates and a fairly low GTP hydrolysis rate. Plays a role in control of the cell cycle, stress response, ribosome biogenesis and in those bacteria that undergo differentiation, in morphogenesis control. The protein is GTPase Obg of Coprothermobacter proteolyticus (strain ATCC 35245 / DSM 5265 / OCM 4 / BT).